Reading from the N-terminus, the 103-residue chain is MYAVIETGGKQFRVEEGKVLFVEKLDANVGDTVTIDKVLLVEKDGAVKVGTPVVDGAKALLKVVEHGKGEKIIVFKMKSKKNYRRKQGHRQPYTKVVVEAIQA.

The protein belongs to the bacterial ribosomal protein bL21 family. As to quaternary structure, part of the 50S ribosomal subunit. Contacts protein L20.

This protein binds to 23S rRNA in the presence of protein L20. The chain is Large ribosomal subunit protein bL21 from Desulfitobacterium hafniense (strain DSM 10664 / DCB-2).